Here is a 407-residue protein sequence, read N- to C-terminus: 45 kDa calcium-binding protein (407 aa).

The signal sequence occupies residues 1–35; that stretch reads MVWSWVAMASRWGPLVGLAPRCLWLLGAVLLMDAS. N40 carries N-linked (GlcNAc...) asparagine glycosylation. 2 EF-hand domains span residues 98 to 133 and 137 to 172; these read RSRR…KTAE and EAME…SKGH. The residue at position 99 (S99) is a Phosphoserine. 10 residues coordinate Ca(2+): D111, N113, D115, K117, E122, D150, D152, D154, H156, and E161. T193 and T217 each carry phosphothreonine. The segment covering 249–259 has biased composition (low complexity); that stretch reads GSSLAGAPGPG. Residues 249-282 form a disordered region; the sequence is GSSLAGAPGPGDQRQGPGIAGKSGKVLREPQPGC. Positions 291, 293, 295, 297, and 302 each coordinate Ca(2+). EF-hand domains are found at residues 291 to 313, 323 to 358, and 359 to 394; these read DQDG…TVEN, WVKD…MNEY, and NALN…FTGS. T310 carries the post-translational modification Phosphothreonine. Residues D336, N338, and D340 each contribute to the Ca(2+) site. Residue T344 is modified to Phosphothreonine. 6 residues coordinate Ca(2+): E347, D372, N374, N376, H378, and E383. The interval 354–407 is necessary for intracellular retention in Golgi apparatus lumen; it reads PMNEYNALNEAKQMIAVADENQNHHLEPEEVLKYSEFFTGSKLVDYARSVHEEF.

The protein belongs to the CREC family.

It is found in the golgi apparatus lumen. Its function is as follows. May regulate calcium-dependent activities in the endoplasmic reticulum lumen or post-ER compartment. The polypeptide is 45 kDa calcium-binding protein (SDF4) (Macaca fascicularis (Crab-eating macaque)).